The chain runs to 142 residues: uncharacterized protein (142 aa).

This is an uncharacterized protein from Bacillus anthracis.